The following is a 423-amino-acid chain: G-protein coupled receptor 83 (423 aa).

The signal sequence occupies residues 1 to 17 (MKVPPVLLLFLLSSVRA). Residues 18 to 71 (TEQPQVVTEHPSMEAALTGPNASSHFWANYTFSDWQNFVGRRRYGAESQNPTVK) are Extracellular-facing. N-linked (GlcNAc...) asparagine glycosylation is found at Asn-38 and Asn-46. Residues 72 to 92 (ALLIVAYSFTIVFSLFGNVLV) traverse the membrane as a helical segment. Residues 93 to 107 (CHVIFKNQRMHSATS) are Cytoplasmic-facing. Residues 108-129 (LFIVNLAVADIMITLLNTPFTL) traverse the membrane as a helical segment. The Extracellular segment spans residues 130 to 145 (VRFVNSTWVFGKGMCH). Residue Asn-134 is glycosylated (N-linked (GlcNAc...) asparagine). A disulfide bridge links Cys-144 with Cys-224. The helical transmembrane segment at 146 to 167 (VSRFAQYCSLHVSALTLTAIAV) threads the bilayer. Residues 168–186 (DRHQVIMHPLKPRISITKG) are Cytoplasmic-facing. A helical transmembrane segment spans residues 187–208 (VIYIAVIWVMATFFSLPHAICQ). The Extracellular segment spans residues 209–238 (KLFTFKYSEDIVRSLCLPDFPEPADLFWKY). Residues 239–260 (LDLATFILLYLLPLFIISVAYA) form a helical membrane-spanning segment. Over 261–293 (RVAKKLWLCNTIGDVTTEQYLALRRKKKTTVKM) the chain is Cytoplasmic. Residues 294–315 (LVLVVVLFALCWFPLNCYVLLL) form a helical membrane-spanning segment. Residues 316–327 (SSKAIHTNNALY) lie on the Extracellular side of the membrane. Residues 328 to 348 (FAFHWFAMSSTCYNPFIYCWL) form a helical membrane-spanning segment. The Cytoplasmic segment spans residues 349-423 (NENFRVELKA…SSVEPVVAMS (75 aa)). The segment at 389 to 423 (SHGRRAPLPNHHLPSSQIQSGKTDLSSVEPVVAMS) is disordered. Polar residues predominate over residues 401 to 414 (LPSSQIQSGKTDLS).

It belongs to the G-protein coupled receptor 1 family. In terms of tissue distribution, predominantly expressed in the brain, with moderate expression in the hypothalamus. Expressed in the thymus.

It is found in the cell membrane. In terms of biological role, G-protein coupled receptor for PEN, a neuropeptide produced from the precursor protein, proSAAS (encoded by PCSK1N). Acts through a G(i)- and G(q)-alpha-alpha-mediated pathway in response to PEN. Plays a role in food intake and body weight regulation. May contribute to the regulation of anxiety-related behaviors. The chain is G-protein coupled receptor 83 from Mus musculus (Mouse).